Consider the following 289-residue polypeptide: RNA-binding protein CP31B, chloroplastic (289 aa).

The transit peptide at 1 to 71 directs the protein to the chloroplast; that stretch reads MTSSVLTPSL…NSSPVVTFVS (71 aa). 2 RRM domains span residues 113-191 and 207-285; these read AKLF…RAAP and FRIY…VAEE.

In terms of processing, ADP-ribosylated by the Pseudomonas syringae type III effector HopU1. ADP-ribosylation reduces the ability of the protein to bind RNA.

The protein resides in the plastid. Its subcellular location is the chloroplast. In terms of biological role, required for specific RNA editing events in chloroplasts and stabilizes specific chloroplast mRNAs. The sequence is that of RNA-binding protein CP31B, chloroplastic from Arabidopsis thaliana (Mouse-ear cress).